Reading from the N-terminus, the 62-residue chain is Large ribosomal subunit protein eL24 (62 aa).

Positions 6, 9, 32, and 36 each coordinate Zn(2+). A C4-type zinc finger spans residues 6–36 (CSFCGADIPPGYGIMYVRSDGTVQRFCSRKC).

It belongs to the eukaryotic ribosomal protein eL24 family. In terms of assembly, part of the 50S ribosomal subunit. Forms a cluster with proteins L3 and L14. Zn(2+) is required as a cofactor.

Functionally, binds to the 23S rRNA. The chain is Large ribosomal subunit protein eL24 from Pyrobaculum calidifontis (strain DSM 21063 / JCM 11548 / VA1).